The sequence spans 225 residues: Small ribosomal subunit protein uS3 (225 aa).

In terms of domain architecture, KH type-2 spans 38–106 (LRAHLRRKLS…DVALNIVEIR (69 aa)).

Belongs to the universal ribosomal protein uS3 family. As to quaternary structure, part of the 30S ribosomal subunit. Forms a tight complex with proteins S10 and S14.

Its function is as follows. Binds the lower part of the 30S subunit head. Binds mRNA in the 70S ribosome, positioning it for translation. This chain is Small ribosomal subunit protein uS3, found in Gluconacetobacter diazotrophicus (strain ATCC 49037 / DSM 5601 / CCUG 37298 / CIP 103539 / LMG 7603 / PAl5).